The primary structure comprises 1997 residues: Protein MOR1 (1997 aa).

2 HEAT repeats span residues 48–86 (DARL…AADA) and 164–202 (VVPP…WIGK). Positions 236 to 264 (RKIRSEQEKELEEEVVPEAAGTNNSEEAV) are disordered. HEAT repeat units follow at residues 321 to 359 (PGDF…GLRT), 362 to 400 (SGNS…SGCI), and 441 to 479 (LKLH…MVGM). The interval 501–576 (IGSASDTTSG…DGGPQSKASA (76 aa)) is disordered. Residues 504 to 520 (ASDTTSGTVAASNTGVG) show a composition bias toward polar residues. Low complexity predominate over residues 529–539 (SSSMRRSAASM). HEAT repeat units lie at residues 848–886 (EDIS…EAHK), 890–928 (PTGT…AMGP), 931–969 (EKSS…AAQL), and 1007–1045 (PSEA…ICGQ). Residues 1087 to 1115 (MSLPSKAGSKNNKHGPNDRGSNVSKAVSQ) are disordered. HEAT repeat units follow at residues 1233–1259 (TTCL…MLTE), 1260–1294 (AEAA…MVNI), 1295–1332 (YSLP…HHGT), and 1334–1372 (VSGL…NLGD). The span at 1400-1410 (MDKRREGRPGD) shows a compositional bias: basic and acidic residues. Residues 1400-1436 (MDKRREGRPGDARAALRRSVRENGSDIAEQSGEAVSR) form a disordered region. An HEAT 14 repeat occupies 1539-1579 (RSCKYVLNTLMQTFQIKRLAHAVKEGTLDNLITELLLWLLD). The interval 1755–1776 (MGQTHWGDAGSNNPNPSTHSTD) is disordered. Residues 1764-1776 (GSNNPNPSTHSTD) show a composition bias toward polar residues.

Belongs to the TOG/XMAP215 family.

It localises to the cytoplasm. It is found in the cytoskeleton. Its function is as follows. Microtubule-associated protein that is essential for cortical microtubules organization and function. In Oryza sativa subsp. japonica (Rice), this protein is Protein MOR1 (MOR1).